The sequence spans 176 residues: Cytochrome b561 homolog 1 (176 aa).

The Cytoplasmic segment spans residues 1–7; the sequence is MNRFSKT. The helical transmembrane segment at 8–28 threads the bilayer; it reads QIYLHWITLLFVAITYAAMEL. His-12 contributes to the heme b binding site. Over 29-45 the chain is Periplasmic; that stretch reads RGWFPKGSSTYLLMRET. Heme b is bound at residue His-46. A helical transmembrane segment spans residues 46 to 63; that stretch reads HYNAGIFVWVLMFSRLII. The Cytoplasmic portion of the chain corresponds to 64–85; that stretch reads KHRYSDPSIVPPPPAWQMKAAS. The helical transmembrane segment at 86-106 threads the bilayer; the sequence is LMHIMLYITFLALPLLGIALM. The Periplasmic portion of the chain corresponds to 107-141; the sequence is AYSGKSWSFLGFNVSPFVTPNSEIKALIKNIHETW. His-138 and His-152 together coordinate heme b. A helical membrane pass occupies residues 142–162; the sequence is ANIGYFLIAAHAGAALFHHYI. Over 163 to 176 the chain is Cytoplasmic; it reads QKDNTLLRMMPRRK.

This sequence belongs to the cytochrome b561 family. Requires heme b as cofactor.

Its subcellular location is the cell inner membrane. The polypeptide is Cytochrome b561 homolog 1 (yodB) (Escherichia coli (strain K12)).